The sequence spans 558 residues: D-xylose-proton symporter-like 3, chloroplastic (558 aa).

The N-terminal 31 residues, 1 to 31 (MAFAVSVQSHFAIRALKRDHFKNPSPRTFCS), are a transit peptide targeting the chloroplast. Transmembrane regions (helical) follow at residues 98–118 (VILPFIFPALGGLLFGYDIGA), 146–166 (LVVSGSLYGALLGSISVYGVA), 175–195 (LIIAAVLYLLGSLITGCAPDL), 197–217 (ILLVGRLLYGFGIGLAMHGAP), 238–258 (LFIVLGILLGFSVGSFQIDVV), 264–284 (MYGFGTPVALLMGLGMWSLPA), 359–379 (ALTIGGGLVLFQQITGQPSVL), 400–420 (VSVIIGVFKLLMTWVAVAKVD), 426–446 (PLLIGGVSGIALSLFLLSAYY), 449–469 (LGGFPLVAVGALLLYVGCYQI), 491–511 (GISLAVLTNFGSNAIVTFAFS), and 522–542 (LFLLFGGIALVSLLFVILVVP).

This sequence belongs to the major facilitator superfamily. Sugar transporter (TC 2.A.1.1) family.

The protein resides in the plastid. The protein localises to the chloroplast membrane. This Arabidopsis thaliana (Mouse-ear cress) protein is D-xylose-proton symporter-like 3, chloroplastic.